Reading from the N-terminus, the 853-residue chain is DNA mismatch repair protein MutS (853 aa).

614–621 serves as a coordination point for ATP; it reads GPNMGGKS.

It belongs to the DNA mismatch repair MutS family.

Its function is as follows. This protein is involved in the repair of mismatches in DNA. It is possible that it carries out the mismatch recognition step. This protein has a weak ATPase activity. The chain is DNA mismatch repair protein MutS from Klebsiella pneumoniae subsp. pneumoniae (strain ATCC 700721 / MGH 78578).